A 589-amino-acid polypeptide reads, in one-letter code: Cyclohexane-1,2-dione hydrolase (589 aa).

E52 contacts thiamine diphosphate. The thiamine pyrophosphate binding stretch occupies residues 400-480 (NHTLPMFGGA…VITMVFTNES (81 aa)). Mg(2+)-binding residues include D451 and N478.

The protein belongs to the TPP enzyme family. Homodimer. The cofactor is Mg(2+). It depends on thiamine diphosphate as a cofactor. FAD serves as cofactor.

It catalyses the reaction cyclohexan-1,2-dione + H2O = 6-oxohexanoate + H(+). In terms of biological role, catalyzes the ring-opening cleavage of the alicyclic alcohol cyclohexane-1,2-dione. This Azoarcus sp protein is Cyclohexane-1,2-dione hydrolase.